We begin with the raw amino-acid sequence, 148 residues long: Proline-rich protein 13 (148 aa).

Residues 1–148 are disordered; sequence MWNPNAGQPG…SSSSSSSDSD (148 aa). 2 stretches are compositionally biased toward pro residues: residues 27–67 and 75–93; these read AHPP…PQPG and GPYPPPYPPPAPGIPPVNP. Basic residues predominate over residues 109 to 135; the sequence is MQKKMKKAHKKMHKHQKHHKYHKHGKH. Over residues 136 to 148 the composition is skewed to low complexity; it reads SSSSSSSSSSDSD.

It localises to the nucleus. Functionally, negatively regulates TSP1 expression at the level of transcription. This down-regulation was shown to reduce taxane-induced apoptosis. The protein is Proline-rich protein 13 (PRR13) of Homo sapiens (Human).